The following is a 97-amino-acid chain: UPF0729 protein GD16342 (97 aa).

The disordered stretch occupies residues 64–97; that stretch reads KPEKASVGPAEESQNPPLNAIAAETEVDESKKEI. A Phosphoserine modification is found at Ser-69.

Belongs to the UPF0729 family.

This is UPF0729 protein GD16342 from Drosophila simulans (Fruit fly).